Consider the following 349-residue polypeptide: Isopentenyl-diphosphate delta-isomerase (349 aa).

9–10 (RK) lines the substrate pocket. FMN contacts are provided by residues 65 to 67 (AMT), Ser-95, and Asn-124. 95 to 97 (STH) is a binding site for substrate. Gln-154 serves as a coordination point for substrate. Glu-155 lines the Mg(2+) pocket. FMN is bound by residues Lys-186, Ser-211, Thr-216, 262–264 (GLR), and 283–284 (SR).

Belongs to the IPP isomerase type 2 family. In terms of assembly, homooctamer. Dimer of tetramers. FMN serves as cofactor. Requires NADPH as cofactor. It depends on Mg(2+) as a cofactor.

The protein resides in the cytoplasm. It carries out the reaction isopentenyl diphosphate = dimethylallyl diphosphate. Functionally, involved in the biosynthesis of isoprenoids. Catalyzes the 1,3-allylic rearrangement of the homoallylic substrate isopentenyl (IPP) to its allylic isomer, dimethylallyl diphosphate (DMAPP). The polypeptide is Isopentenyl-diphosphate delta-isomerase (Staphylococcus aureus (strain MSSA476)).